The sequence spans 574 residues: Cytochrome P450 306a1 (574 aa).

A compositionally biased stretch (basic and acidic residues) spans glutamate 303 to aspartate 314. Residues glutamate 303–aspartate 333 form a disordered region. Acidic residues predominate over residues serine 320–aspartate 333. Residue cysteine 505 coordinates heme.

Belongs to the cytochrome P450 family. Heme serves as cofactor. As to expression, first seen at the early (syncytial) blastoderm stage 4. During cellularization of the blastoderm (stage 5), stripes of expression appear and remain through to stage 10. Expression becomes undetectable during germ band retraction (stages 11-14). By stage 15, some expression resumes in the primordium of the ring gland, so that by stage 17 strong expression is seen, but only in the ring gland. This specific localization continues throughout the larval instars (at protein level). Expressed in the prothoracic gland cells of the larval ring gland (RG). Levels decline just after the molt to the third instar then increase later during the wandering stage. Low levels of expression are seen in the larval brain and fat body. In the adult, majority of expression is restricted to the ovaries, with low levels in the head and carcass of both sexes.

It localises to the endoplasmic reticulum membrane. The protein resides in the microsome membrane. It catalyses the reaction 2,22,25-trideoxyecdysone + 2 reduced [adrenodoxin] + O2 + 2 H(+) = 2,22-dideoxyecdysone + 2 oxidized [adrenodoxin] + H2O. It participates in steroid biosynthesis; ecdysteroid biosynthesis. Functionally, involved in the metabolism of insect hormones; responsible for ecdysteroid C25-hydroxylase activity. May be involved in the breakdown of synthetic insecticides. This chain is Cytochrome P450 306a1, found in Drosophila melanogaster (Fruit fly).